A 103-amino-acid chain; its full sequence is Small ribosomal subunit protein uS10 (103 aa).

It belongs to the universal ribosomal protein uS10 family. Part of the 30S ribosomal subunit.

In terms of biological role, involved in the binding of tRNA to the ribosomes. The sequence is that of Small ribosomal subunit protein uS10 from Borreliella burgdorferi (strain ATCC 35210 / DSM 4680 / CIP 102532 / B31) (Borrelia burgdorferi).